A 400-amino-acid polypeptide reads, in one-letter code: Cysteine desulfurase (400 aa).

Pyridoxal 5'-phosphate contacts are provided by residues 72-73, N152, Q180, and 200-202; these read GT and SGH. K203 is subject to N6-(pyridoxal phosphate)lysine. Position 238 (T238) interacts with pyridoxal 5'-phosphate. The active-site Cysteine persulfide intermediate is the C326. Residue C326 participates in [2Fe-2S] cluster binding.

The protein belongs to the class-V pyridoxal-phosphate-dependent aminotransferase family. NifS/IscS subfamily. As to quaternary structure, homodimer. Pyridoxal 5'-phosphate serves as cofactor.

The catalysed reaction is (sulfur carrier)-H + L-cysteine = (sulfur carrier)-SH + L-alanine. Its function is as follows. Catalyzes the removal of elemental sulfur atoms from cysteine to produce alanine. Seems to participate in the biosynthesis of the nitrogenase metalloclusters by providing the inorganic sulfur required for the Fe-S core formation. In Gluconacetobacter diazotrophicus (strain ATCC 49037 / DSM 5601 / CCUG 37298 / CIP 103539 / LMG 7603 / PAl5), this protein is Cysteine desulfurase.